A 553-amino-acid polypeptide reads, in one-letter code: CTP synthase (553 aa).

The amidoligase domain stretch occupies residues methionine 1 to isoleucine 277. Serine 26 contributes to the CTP binding site. Residue serine 26 participates in UTP binding. Residues glycine 27–isoleucine 32 and aspartate 84 contribute to the ATP site. The Mg(2+) site is built by aspartate 84 and glutamate 152. Residues aspartate 159–glutamate 161, lysine 198–glutamine 203, and lysine 234 contribute to the CTP site. UTP-binding positions include lysine 198–glutamine 203 and lysine 234. Residues leucine 307–histidine 544 enclose the Glutamine amidotransferase type-1 domain. Glycine 364 is an L-glutamine binding site. The Nucleophile; for glutamine hydrolysis role is filled by cysteine 391. Residues leucine 392–glutamine 395, glutamate 415, and arginine 472 each bind L-glutamine. Active-site residues include histidine 517 and glutamate 519.

Belongs to the CTP synthase family. In terms of assembly, homotetramer.

It carries out the reaction UTP + L-glutamine + ATP + H2O = CTP + L-glutamate + ADP + phosphate + 2 H(+). The catalysed reaction is L-glutamine + H2O = L-glutamate + NH4(+). The enzyme catalyses UTP + NH4(+) + ATP = CTP + ADP + phosphate + 2 H(+). It participates in pyrimidine metabolism; CTP biosynthesis via de novo pathway; CTP from UDP: step 2/2. Allosterically activated by GTP, when glutamine is the substrate; GTP has no effect on the reaction when ammonia is the substrate. The allosteric effector GTP functions by stabilizing the protein conformation that binds the tetrahedral intermediate(s) formed during glutamine hydrolysis. Inhibited by the product CTP, via allosteric rather than competitive inhibition. In terms of biological role, catalyzes the ATP-dependent amination of UTP to CTP with either L-glutamine or ammonia as the source of nitrogen. Regulates intracellular CTP levels through interactions with the four ribonucleotide triphosphates. This is CTP synthase from Haloarcula marismortui (strain ATCC 43049 / DSM 3752 / JCM 8966 / VKM B-1809) (Halobacterium marismortui).